A 348-amino-acid chain; its full sequence is Anthranilate phosphoribosyltransferase (348 aa).

5-phospho-alpha-D-ribose 1-diphosphate contacts are provided by residues Gly-84, 87-88 (GD), Thr-92, 94-97 (NITT), 112-120 (KHGNRSVSS), and Ser-124. Residue Gly-84 coordinates anthranilate. Thr-96 is a binding site for Mg(2+). Position 115 (Asn-115) interacts with anthranilate. Arg-170 provides a ligand contact to anthranilate. The Mg(2+) site is built by Asp-228 and Glu-229.

This sequence belongs to the anthranilate phosphoribosyltransferase family. Homodimer. It depends on Mg(2+) as a cofactor.

It catalyses the reaction N-(5-phospho-beta-D-ribosyl)anthranilate + diphosphate = 5-phospho-alpha-D-ribose 1-diphosphate + anthranilate. Its pathway is amino-acid biosynthesis; L-tryptophan biosynthesis; L-tryptophan from chorismate: step 2/5. Catalyzes the transfer of the phosphoribosyl group of 5-phosphorylribose-1-pyrophosphate (PRPP) to anthranilate to yield N-(5'-phosphoribosyl)-anthranilate (PRA). The protein is Anthranilate phosphoribosyltransferase of Corynebacterium glutamicum (strain R).